The primary structure comprises 234 residues: Golgi SNAP receptor complex member 1 (234 aa).

The Cytoplasmic segment spans residues 1 to 212; it reads MSETWEALRK…MQKIKTKKQK (212 aa). Residues 54-121 are a coiled coil; the sequence is VTTEIEGLIE…RDNVDQVLQR (68 aa). A helical; Anchor for type IV membrane protein transmembrane segment spans residues 213–233; the sequence is NTLILAAVISSCLIFTIFWII. Position 234 (Asn234) is a topological domain, vesicular.

The protein belongs to the GOSR1 family. Component of several multiprotein Golgi SNARE complexes.

Its subcellular location is the golgi apparatus membrane. In terms of biological role, involved in transport from the ER to the Golgi apparatus as well as in intra-Golgi transport. It belongs to a super-family of proteins called t-SNAREs or soluble NSF (N-ethylmaleimide-sensitive factor) attachment protein receptor. Cooperates with ykt-6 for proper expression of Golgi-resident proteins. Required along with ykt-6 for normal embryonic development, seam cell division or differentiation, and ray formation. The protein is Golgi SNAP receptor complex member 1 (gos-28) of Caenorhabditis elegans.